Reading from the N-terminus, the 392-residue chain is MIDCRYYQQNECRSCQWLEIPYSQQLTEKQYHLKQQLISINCDEAQWLAPFQSNEQGFRNKAKMVVSGSVERPILGILKNPNDPQNAIDLCDCPLYPTHFSAIFSILKDFIGRAGLVPYNIAKQKGELKYILLTESIATEKLMLRFVLRTENKLPLIRRELPKLLEKLPHLEVISINLQPQHAAILEGEQEIFLTEQQFLPENFNGIPLFIRPQGFFQTNPKVAAGLYASAQQWVAEFPIYNLWDLFCGVGGFGLHCAKALQEKWGKPIKLTGIEISSSAILAASHSAKILGLEHVNFQSLDAASVIENKNENKPDLVIVNPPRRGIGKELSEFLNQIQPHFILYSSCNAMTMGKDLQHLTCYKPLKIQLFDMFPQTSHYEVLVLLERKKIN.

4 residues coordinate [4Fe-4S] cluster: cysteine 4, cysteine 12, cysteine 15, and cysteine 93. S-adenosyl-L-methionine is bound by residues glutamine 218, phenylalanine 247, glutamate 275, and asparagine 321. The active-site Nucleophile is the cysteine 348.

Belongs to the class I-like SAM-binding methyltransferase superfamily. RNA M5U methyltransferase family. RlmC subfamily.

The catalysed reaction is uridine(747) in 23S rRNA + S-adenosyl-L-methionine = 5-methyluridine(747) in 23S rRNA + S-adenosyl-L-homocysteine + H(+). In terms of biological role, catalyzes the formation of 5-methyl-uridine at position 747 (m5U747) in 23S rRNA. This is 23S rRNA (uracil(747)-C(5))-methyltransferase RlmC from Haemophilus influenzae (strain PittGG).